The sequence spans 467 residues: Methylenetetrahydrofolate--tRNA-(uracil-5-)-methyltransferase TrmFO (467 aa).

10–15 (GGGMAG) provides a ligand contact to FAD.

This sequence belongs to the MnmG family. TrmFO subfamily. The cofactor is FAD.

It is found in the cytoplasm. It carries out the reaction uridine(54) in tRNA + (6R)-5,10-methylene-5,6,7,8-tetrahydrofolate + NADH + H(+) = 5-methyluridine(54) in tRNA + (6S)-5,6,7,8-tetrahydrofolate + NAD(+). It catalyses the reaction uridine(54) in tRNA + (6R)-5,10-methylene-5,6,7,8-tetrahydrofolate + NADPH + H(+) = 5-methyluridine(54) in tRNA + (6S)-5,6,7,8-tetrahydrofolate + NADP(+). Catalyzes the folate-dependent formation of 5-methyl-uridine at position 54 (M-5-U54) in all tRNAs. In Hyphomonas neptunium (strain ATCC 15444), this protein is Methylenetetrahydrofolate--tRNA-(uracil-5-)-methyltransferase TrmFO.